The chain runs to 213 residues: Thymidylate kinase (213 aa).

Position 9–16 (9–16 (GLEGAGKS)) interacts with ATP.

This sequence belongs to the thymidylate kinase family.

It catalyses the reaction dTMP + ATP = dTDP + ADP. Its function is as follows. Phosphorylation of dTMP to form dTDP in both de novo and salvage pathways of dTTP synthesis. In Aeromonas hydrophila subsp. hydrophila (strain ATCC 7966 / DSM 30187 / BCRC 13018 / CCUG 14551 / JCM 1027 / KCTC 2358 / NCIMB 9240 / NCTC 8049), this protein is Thymidylate kinase.